Here is a 94-residue protein sequence, read N- to C-terminus: MTPIEYIDRALALVVDRLARYPGYEVLLSAEKQLQYIRSVLLDRSLDRSALHRLTLGSIAVKEFDETDPELSRALKDAYYVGIRTGRGLKVDLP.

Immunity protein that plays a role in preventing early activation of toxin Tse6. The protein is Immune protein Tsi6 of Pseudomonas aeruginosa (strain ATCC 15692 / DSM 22644 / CIP 104116 / JCM 14847 / LMG 12228 / 1C / PRS 101 / PAO1).